A 486-amino-acid chain; its full sequence is Dipeptide and tripeptide permease B (486 aa).

The Cytoplasmic portion of the chain corresponds to 1-27 (MNKPVSIGLLQQPKPFFMIFFVELWER). A helical transmembrane segment spans residues 28–48 (FGYYGVQGVLTVYFVQKLGFS). The Periplasmic portion of the chain corresponds to 49–52 (QEQA). A helical transmembrane segment spans residues 53 to 73 (FITFGAFAALVFGLISIGGYV). The Cytoplasmic segment spans residues 74-82 (GDHLLGTKR). A helical membrane pass occupies residues 83–103 (TIVLGAIVLAIGYFMTGLSIL). The Periplasmic segment spans residues 104 to 106 (HPN). The helical transmembrane segment at 107–127 (LIFYALGTIAVGNGLFKANPA) threads the bilayer. Residues 128-146 (SLLSKCYPPKDPRLDGAFT) are Cytoplasmic-facing. The chain crosses the membrane as a helical span at residues 147–167 (LFYMSINLGSLFSLALAPVIA). The Periplasmic segment spans residues 168–172 (EKFSY). Residues 173–193 (AVTYNICGIGLIIALLVYIFC) traverse the membrane as a helical segment. Over 194-211 (RNTVRNIGSEPDHQRINY) the chain is Cytoplasmic. Residues 212-232 (TNLFLVVAGSVVMVYVCAWLM) traverse the membrane as a helical segment. A topological domain (periplasmic) is located at residue H233. The chain crosses the membrane as a helical span at residues 234-254 (NVKIANIMLITLSVIVVFIFF). Over 255-267 (REALKQDKIGRNK) the chain is Cytoplasmic. A helical membrane pass occupies residues 268-288 (MFVAFILMLQAIVFFILYAQM). Topologically, residues 289-311 (PTSLNFFAIHNVHHQLLGFNINP) are periplasmic. A helical transmembrane segment spans residues 312 to 332 (VSFQALNPFWIVVASPILAVL). The Cytoplasmic portion of the chain corresponds to 333–348 (YTHWGAKGKDLTMPAK). The helical transmembrane segment at 349–369 (FAVGMFLCSLGFLTAAAAGLW) threads the bilayer. The Periplasmic segment spans residues 370–375 (FADEQG). The helical transmembrane segment at 376 to 396 (LTSAWFIVLVYLFQGVGELMI) threads the bilayer. Topologically, residues 397-419 (SALGLAMIAALVPQYLMGFILGM) are cytoplasmic. The helical transmembrane segment at 420–440 (WYLTQATSSLLGGYVAALTAA) threads the bilayer. Topologically, residues 441 to 456 (PKGITDPLQTLPVYTS) are periplasmic. A helical transmembrane segment spans residues 457-477 (VFGKIGIATFIVAIIMAATVP). The Cytoplasmic segment spans residues 478–486 (LLNRMMQEK).

Belongs to the major facilitator superfamily. Proton-dependent oligopeptide transporter (POT/PTR) (TC 2.A.17) family. DtpB subfamily.

The protein localises to the cell inner membrane. In terms of biological role, proton-dependent permease that transports di- and tripeptides. The polypeptide is Dipeptide and tripeptide permease B (Photorhabdus luminescens (Xenorhabdus luminescens)).